Reading from the N-terminus, the 370-residue chain is tRNA/tmRNA (uracil-C(5))-methyltransferase (370 aa).

S-adenosyl-L-methionine contacts are provided by glutamine 190, tyrosine 218, asparagine 223, glutamate 239, and aspartate 299. Cysteine 324 acts as the Nucleophile in catalysis. Glutamate 358 functions as the Proton acceptor in the catalytic mechanism.

The protein belongs to the class I-like SAM-binding methyltransferase superfamily. RNA M5U methyltransferase family. TrmA subfamily.

It catalyses the reaction uridine(54) in tRNA + S-adenosyl-L-methionine = 5-methyluridine(54) in tRNA + S-adenosyl-L-homocysteine + H(+). The enzyme catalyses uridine(341) in tmRNA + S-adenosyl-L-methionine = 5-methyluridine(341) in tmRNA + S-adenosyl-L-homocysteine + H(+). In terms of biological role, dual-specificity methyltransferase that catalyzes the formation of 5-methyluridine at position 54 (m5U54) in all tRNAs, and that of position 341 (m5U341) in tmRNA (transfer-mRNA). This chain is tRNA/tmRNA (uracil-C(5))-methyltransferase, found in Sodalis glossinidius (strain morsitans).